Here is a 660-residue protein sequence, read N- to C-terminus: Epithelial sodium channel subunit gamma (660 aa).

Residues 1–55 (MSKSGKKLTQKLKKNLPVTGPQAPTLYELMQWYCLNTNTHGCRRIVVSKGRLRRW) lie on the Cytoplasmic side of the membrane. The helical transmembrane segment at 56–76 (IWISLTLCAVAVIFWQCALLL) threads the bilayer. Over 77–537 (MSYYSVSASI…VTLLSNFGGQ (461 aa)) the chain is Extracellular. Cystine bridges form between Cys-101-Cys-286, Cys-209-Cys-217, Cys-263-Cys-270, Cys-375-Cys-460, Cys-397-Cys-456, Cys-401-Cys-452, Cys-410-Cys-437, and Cys-412-Cys-426. Residues 538-558 (LGLWMSCSMICVLEIIEVFFI) form a helical membrane-spanning segment. At 559-660 (DSFWVVLRQR…IDSDEDVERL (102 aa)) the chain is on the cytoplasmic side.

Belongs to the amiloride-sensitive sodium channel (TC 1.A.6) family. SCNN1G subfamily. In terms of assembly, component of the heterotrimeric epithelial sodium channel (ENaC) composed of an alpha/SCNN1A, a beta/SCNN1B and a gamma/SCNN1G subunit.

The protein localises to the apical cell membrane. It catalyses the reaction Na(+)(in) = Na(+)(out). Originally identified and characterized by its inhibition by the diuretic drug amiloride. Its function is as follows. This is one of the three pore-forming subunits of the heterotrimeric epithelial sodium channel (ENaC), a critical regulator of sodium balance and fluid homeostasis. ENaC operates in epithelial tissues, where it mediates the electrodiffusion of sodium ions from extracellular fluid through the apical membrane of cells, with water following osmotically. In Xenopus laevis (African clawed frog), this protein is Epithelial sodium channel subunit gamma (scnn1g-a).